Here is a 912-residue protein sequence, read N- to C-terminus: Ubiquitin carboxyl-terminal hydrolase 3 (912 aa).

Residues 1 to 11 (MNMQDANKEES) are compositionally biased toward basic and acidic residues. Disordered regions lie at residues 1 to 30 (MNMQDANKEESYSMYPKTSSPPPPTPTNMQ), 68 to 176 (IYHQ…SYSS), 241 to 384 (NSSV…TTAG), and 396 to 417 (GKSSSPLLSKQPQKKDKKYVPP). Low complexity-rich tracts occupy residues 82–95 (NNINGGSTTNNNNI), 102–140 (SNGITNNNGSSGNQGANSSGSGMSYNKSHTYHHNYSNNH), and 159–176 (TNSSNGNGSSATSPSYSS). Basic residues predominate over residues 249–259 (AHHHTKSHSIP). The span at 260–310 (KHNEEVKTETHGEEEDAHDKKPHASKDAHELKKKTEVKKEDAKQDRNEKVI) shows a compositional bias: basic and acidic residues. Low complexity predominate over residues 335 to 355 (SKTSSPSPSPPAAKSWSAIAS). 2 stretches are compositionally biased toward polar residues: residues 361 to 384 (RQASNKTVSGSMVTKTPISGTTAG) and 396 to 406 (GKSSSPLLSKQ). Residues 460 to 911 (RGIINRANIC…TAYILMYQKR (452 aa)) enclose the USP domain. The active-site Nucleophile is Cys-469. The Proton acceptor role is filled by His-861.

Belongs to the peptidase C19 family. As to quaternary structure, heterotetramer with BRE5; contains two molecules of BRE5 and two molecules of UBP3. Forms a complex composed of CDC48, DOA1, deubiquitinase UBP3 and probably BRE5. Within the complex interacts directly with DOA1 and CDC48 in a BRE5-independent manner.

The catalysed reaction is Thiol-dependent hydrolysis of ester, thioester, amide, peptide and isopeptide bonds formed by the C-terminal Gly of ubiquitin (a 76-residue protein attached to proteins as an intracellular targeting signal).. Has an ATP-independent isopeptidase activity, cleaving at the C-terminus of the ubiquitin moiety in natural or engineered linear fusion proteins, irrespective of their size or the presence of an N-terminal extension to ubiquitin. Plays a role in regulation of silencing by interacting with SIR4. Also, in conjunction with BRE5, cleaves ubiquitin, leading to the subsequent mono-ubiquitination of SEC23. Required for ribophagy, a process which relocalizes ribosomal particles into the vacuole for degradation in response to starvation. This is Ubiquitin carboxyl-terminal hydrolase 3 (UBP3) from Saccharomyces cerevisiae (strain ATCC 204508 / S288c) (Baker's yeast).